A 161-amino-acid chain; its full sequence is MSEAGAASEAVRDAALRLLARREHTRRELAQKLARRGHDPGYVHPVLEALAEEGLLDEGRFAEVFVRSRVERGQGPVRIAQELRQRGVADGVIDEVLEDAEVDWLAQARAVRERRFGAGVPADRREALRQAQFLQRRGFTADQVRAAAAAADEDDERGPYG.

It belongs to the RecX family.

Its subcellular location is the cytoplasm. Its function is as follows. Modulates RecA activity. In Halorhodospira halophila (strain DSM 244 / SL1) (Ectothiorhodospira halophila (strain DSM 244 / SL1)), this protein is Regulatory protein RecX.